A 151-amino-acid chain; its full sequence is UPF0336 protein Franean1_6066 (151 aa).

The MaoC-like domain maps to 8 to 127 (VGRSYTSDVP…NEVLVTSYEF (120 aa)).

Belongs to the UPF0336 family.

This is UPF0336 protein Franean1_6066 from Parafrankia sp. (strain EAN1pec).